The sequence spans 187 residues: Ribosome-recycling factor (187 aa).

This sequence belongs to the RRF family.

The protein resides in the cytoplasm. In terms of biological role, responsible for the release of ribosomes from messenger RNA at the termination of protein biosynthesis. May increase the efficiency of translation by recycling ribosomes from one round of translation to another. The polypeptide is Ribosome-recycling factor (Ruegeria sp. (strain TM1040) (Silicibacter sp.)).